The chain runs to 199 residues: dITP/XTP pyrophosphatase (199 aa).

Thr-8–Lys-13 is a substrate binding site. Catalysis depends on Asp-68, which acts as the Proton acceptor. Asp-68 serves as a coordination point for Mg(2+). Substrate contacts are provided by residues Ser-69, His-151–Asp-154, Lys-174, and His-179–Arg-180.

It belongs to the HAM1 NTPase family. Homodimer. Mg(2+) serves as cofactor.

The enzyme catalyses XTP + H2O = XMP + diphosphate + H(+). It catalyses the reaction dITP + H2O = dIMP + diphosphate + H(+). The catalysed reaction is ITP + H2O = IMP + diphosphate + H(+). Its function is as follows. Pyrophosphatase that catalyzes the hydrolysis of nucleoside triphosphates to their monophosphate derivatives, with a high preference for the non-canonical purine nucleotides XTP (xanthosine triphosphate), dITP (deoxyinosine triphosphate) and ITP. Seems to function as a house-cleaning enzyme that removes non-canonical purine nucleotides from the nucleotide pool, thus preventing their incorporation into DNA/RNA and avoiding chromosomal lesions. The sequence is that of dITP/XTP pyrophosphatase from Leifsonia xyli subsp. xyli (strain CTCB07).